An 80-amino-acid polypeptide reads, in one-letter code: Bowman-Birk type proteinase inhibitor (80 aa).

Intrachain disulfides connect C19-C70, C20-C35, C23-C66, C25-C33, C41-C47, C44-C59, and C49-C57.

In terms of assembly, occurs as a monomer, dimer or trimer. The dimer may be the active form. Post-translationally, binds calcium, probably through His-3 to His-6.

Functionally, protease inhibitor with activity against cysteine, aspartic and serine proteases. Highest activity against serine proteases, in particular trypsin and trypsin-like proteases. The sequence is that of Bowman-Birk type proteinase inhibitor from Phaseolus acutifolius (Tepary bean).